The primary structure comprises 376 residues: Protein FAM199X (376 aa).

Residues 237–253 (YIKEHSPRQRSTRESWK) show a composition bias toward basic and acidic residues. A disordered region spans residues 237-350 (YIKEHSPRQR…QRQARKERLS (114 aa)). A compositionally biased stretch (low complexity) spans 255–300 (TSYSTASTSGVSGASVSSSSASMVSTASSTGSSGGNSASNSSANMS). A compositionally biased stretch (basic residues) spans 318–337 (DSKKRSKQRKLQQKALRKRQ). The stretch at 320-349 (KKRSKQRKLQQKALRKRQLKEQRQARKERL) forms a coiled coil. Basic and acidic residues predominate over residues 338-349 (LKEQRQARKERL).

This sequence belongs to the FAM199 family.

The sequence is that of Protein FAM199X (fam199x) from Xenopus tropicalis (Western clawed frog).